Consider the following 184-residue polypeptide: Peptide deformylase (184 aa).

Fe cation-binding residues include Cys-92 and His-134. Glu-135 is an active-site residue. His-138 contacts Fe cation.

It belongs to the polypeptide deformylase family. Fe(2+) serves as cofactor.

It carries out the reaction N-terminal N-formyl-L-methionyl-[peptide] + H2O = N-terminal L-methionyl-[peptide] + formate. In terms of biological role, removes the formyl group from the N-terminal Met of newly synthesized proteins. Requires at least a dipeptide for an efficient rate of reaction. N-terminal L-methionine is a prerequisite for activity but the enzyme has broad specificity at other positions. This is Peptide deformylase from Psychrobacter arcticus (strain DSM 17307 / VKM B-2377 / 273-4).